A 104-amino-acid polypeptide reads, in one-letter code: MNVFEKIIQGEIPCSKILENERFLSFYDINPKAKVHALVIPKQSIQDFNGITPELMAQMTSFIFEVVEKLGIKEKGYKLLTNVGKNAGQEVMHLHFHILSGDKH.

In terms of domain architecture, HIT spans 3–104; sequence VFEKIIQGEI…HFHILSGDKH (102 aa). The Histidine triad motif signature appears at 93–97; the sequence is HLHFH.

This is an uncharacterized protein from Helicobacter pylori (strain J99 / ATCC 700824) (Campylobacter pylori J99).